Reading from the N-terminus, the 523-residue chain is Effector protein hopAB1 (523 aa).

3 disordered regions span residues 1–94 (MPGI…EAQQ), 165–223 (VRQQ…QGLD), and 299–320 (RQTT…SGRR). Residues 18-31 (TDGEPVTEREHDSS) are compositionally biased toward basic and acidic residues. The segment covering 181–194 (SSSGSSQRSLIGRS) has biased composition (low complexity).

This sequence belongs to the HopAB family.

It localises to the secreted. In terms of biological role, effector protein that plays different roles depending on the species and plant cultivars that interact with the pathogen. Acts as a virulence determinant by enhancing the development of disease symptoms and bacterial growth. Acts as an avirulence factor by eliciting hypersensitive response (HR) and plant resistance. This Pseudomonas savastanoi pv. glycinea (Pseudomonas syringae pv. glycinea) protein is Effector protein hopAB1 (hopAB1).